Reading from the N-terminus, the 524-residue chain is 2-isopropylmalate synthase (524 aa).

Positions 5–267 (VIIFDTTLRD…HTNINHQEIF (263 aa)) constitute a Pyruvate carboxyltransferase domain. The Mn(2+) site is built by aspartate 14, histidine 202, histidine 204, and asparagine 238. Positions 392–524 (SLDYFSVQSG…SKHQNNQETV (133 aa)) are regulatory domain.

The protein belongs to the alpha-IPM synthase/homocitrate synthase family. LeuA type 1 subfamily. In terms of assembly, homodimer. Mn(2+) serves as cofactor.

It localises to the cytoplasm. It carries out the reaction 3-methyl-2-oxobutanoate + acetyl-CoA + H2O = (2S)-2-isopropylmalate + CoA + H(+). It functions in the pathway amino-acid biosynthesis; L-leucine biosynthesis; L-leucine from 3-methyl-2-oxobutanoate: step 1/4. In terms of biological role, catalyzes the condensation of the acetyl group of acetyl-CoA with 3-methyl-2-oxobutanoate (2-ketoisovalerate) to form 3-carboxy-3-hydroxy-4-methylpentanoate (2-isopropylmalate). In Serratia proteamaculans (strain 568), this protein is 2-isopropylmalate synthase.